The following is a 187-amino-acid chain: Resolvase OPG149 (187 aa).

Belongs to the RuvC family. Poxviruses-type subfamily. It depends on Mg(2+) as a cofactor.

Plays a role in DNA replication by cleaving viral DNA concatamers to yield unit-length viral genomes. The concatamer junctions contain inverted repeat sequences that can be extruded as cruciforms, yielding Holliday junctions that A22 protein cleaves. This Cynomys gunnisoni (Gunnison's prairie dog) protein is Resolvase OPG149 (OPG149).